We begin with the raw amino-acid sequence, 332 residues long: MDPRSEVLLRQRHLFATPLLLAGLPADDLLAELPQAQGWSWHAGEQAQLDARFPDRSRFDTRAPTGAWTSAVLFLPKSRELTDYLLASLAARLPGGELFLVGEKRGGIERASKQLAAYGKPRKLDSARHCQLWQVRIEQAPAEPDLHALAQRYSLPLADGELQVVSLPGVFSHGRLDRGSALLLGQLQALPGGHLLDFGCGAGVLGAVLKRRYPASRLTLLDVDAFAVESSRLTLAANGLDGEVIAADGIDGAPRELAAIVSNPPFHQGVHTDYQASERLLQRAAEHLAPGGELRLVANSFLKYPPLIERHLGPCRTLAEGDGFRIYSARRS.

The protein belongs to the methyltransferase superfamily. RsmC family. In terms of assembly, monomer.

It is found in the cytoplasm. It carries out the reaction guanosine(1207) in 16S rRNA + S-adenosyl-L-methionine = N(2)-methylguanosine(1207) in 16S rRNA + S-adenosyl-L-homocysteine + H(+). Its function is as follows. Specifically methylates the guanine in position 1207 of 16S rRNA in the 30S particle. The sequence is that of Ribosomal RNA small subunit methyltransferase C from Pseudomonas aeruginosa (strain UCBPP-PA14).